A 671-amino-acid polypeptide reads, in one-letter code: MAELTALHTLTAQMKREGIRRLLVLSGEEGWCFEHTLKLRDALPGDWLWISPRPDAENHCSPSALQTLLGREFRHAVFDARHGFDAAAFAALSGTLKAGSWLVLLLPVWEEWENQPDADSLRWSDCPDPIATPHFVQHLKRVLTADNEAILWRQNQPFSLAHFTPRTDWYPATGAPQPEQQQLLKQLMTMPPGVAAVTAARGRGKSALAGQLISRIAGRAIVTAPAKASTDVLAQFAGEKFRFIAPDALLASDEQADWLVVDEAAAIPAPLLHQLVSRFPRTLLTTTVQGYEGTGRGFLLKFCARFPHLHRFELQQPIRWAQGCPLEKMVSEALVFDDENFTHTPQGNIVISAFEQTLWQSDPETPLKVYQLLSGAHYRTSPLDLRRMMDAPGQHFLQAAGENEIAGALWLVDEGGLSQQLSQAVWAGFRRPRGNLVAQSLAAHGNNPLAATLRGRRVSRIAVHPARQREGTGRQLIAGALQYTQDLDYLSVSFGYTGELWRFWQRCGFVLVRMGNHREASSGCYTAMALLPMSDAGKQLAEREHYRLRRDAQALAQWNGETLPVDPLNDAVLSDDDWLELAGFAFAHRPLLTSLGCLLRLLQTSELALPALRGRLQKNASDAQLCTTLKLSGRKMLLVRQREEAAQALFALNDVRTERLRDRITQWQLFH.

Residues Q180, 202 to 211, and R319 each bind ATP; that span reads GRGKSALAGQ. An N-acetyltransferase domain is found at 356-531; it reads QTLWQSDPET…SGCYTAMALL (176 aa). Acetyl-CoA contacts are provided by residues 461-463, 468-474, E499, and R506; these read IAV and QREGTGR.

This sequence belongs to the RNA cytidine acetyltransferase family. TmcA subfamily.

It is found in the cytoplasm. It carries out the reaction cytidine(34) in elongator tRNA(Met) + acetyl-CoA + ATP + H2O = N(4)-acetylcytidine(34) in elongator tRNA(Met) + ADP + phosphate + CoA + H(+). It catalyses the reaction 2-hydroxyisobutanoyl-CoA + L-lysyl-[protein] = N(6)-(2-hydroxyisobutanoyl)-L-lysyl-[protein] + CoA + H(+). Its activity is regulated as follows. ATP/GTP hydrolysis is stimulated by the addition of acetyl-CoA and tRNA(Met). Binding of acetyl-CoA to TmcA activates both ATPase and tRNA-binding activities. ATP promotes the 2-hydroxyisobutyryltransferase activity. Its function is as follows. Catalyzes the formation of N(4)-acetylcytidine (ac(4)C) at the wobble position of tRNA(Met), by using acetyl-CoA as an acetyl donor and ATP (or GTP). It recognizes the wobble base of tRNA(Met), thus distinguishing between tRNA(Met) and the structurally similar tRNA(Ile2). Could use an RNA helicase motor driven by ATP hydrolysis to deliver the wobble base of tRNA(Met) to the acetyltransferase domain of TmcA. Also functions as a lysine 2-hydroxyisobutyryltransferase to regulate transcription. Can specifically catalyze the 2-hydroxyisobutyrylation (Khib) of the DNA-binding protein H-NS. Hydroxyisobutyrylation of H-NS decreases its DNA-binding activity, promotes the expression of acid-resistance genes and enhances bacterial survival under extreme acid stress. The chain is tRNA(Met) cytidine acetyltransferase TmcA from Escherichia coli (strain K12).